We begin with the raw amino-acid sequence, 387 residues long: Small ribosomal subunit protein mS31 (387 aa).

Residues 1–56 (MLHRIPAFIRPRPFSGLPLSCGNREVSVAASVLPAAGSGAVRTENTIQRHFCTSRS) constitute a mitochondrion transit peptide. 2 disordered regions span residues 59–83 (SKKDDQSVPANETSQKAAESQGEGK) and 203–228 (KSPSMRVSSRPQHQIQFDEEVDSSLS). Composition is skewed to polar residues over residues 66-76 (VPANETSQKAA) and 207-217 (MRVSSRPQHQI).

It belongs to the mitochondrion-specific ribosomal protein mS31 family. Component of the mitochondrial ribosome small subunit (28S) which comprises a 12S rRNA and about 30 distinct proteins.

It is found in the mitochondrion. The protein is Small ribosomal subunit protein mS31 (Mrps31) of Rattus norvegicus (Rat).